Here is a 1429-residue protein sequence, read N- to C-terminus: Gag-Pol polyprotein (1429 aa).

Glycine 2 is lipidated: N-myristoyl glycine; by host. Positions 7–31 are interaction with Gp41; it reads VLSGGKLDKWEKIQLRPGGKKKYRL. An interaction with host CALM1 region spans residues 8–43; that stretch reads LSGGKLDKWEKIQLRPGGKKKYRLKHLVWASRELER. The interval 12 to 19 is interaction with host AP3D1; sequence KLDKWEKI. The tract at residues 14-33 is interaction with membrane phosphatidylinositol 4,5-bisphosphate and RNA; it reads DKWEKIQLRPGGKKKYRLKH. Positions 16-22 match the Nuclear export signal motif; sequence WEKIQLR. The short motif at 26–32 is the Nuclear localization signal element; the sequence is KKKYRLK. The interaction with membrane phosphatidylinositol 4,5-bisphosphate stretch occupies residues 73–77; it reads EELRS. A disordered region spans residues 105-124; it reads EEEQNRTQQKTQQGKADKGV. Polar residues predominate over residues 110-124; it reads RTQQKTQQGKADKGV. Tyrosine 128 carries the phosphotyrosine; by host modification. The segment at 185–223 is interaction with human PPIA/CYPA and NUP153; that stretch reads NTVGGHQAAMQMLKDTINEEAAEWDRMHPVQAGPIPPGQ. The segment at 273–359 is dimerization/Multimerization of capsid protein p24; sequence YSPVSILDIR…GGPGHKARVL (87 aa). 2 consecutive CCHC-type zinc fingers follow at residues 385–402 and 406–423; these read IKCF…NCRA and KGCW…DCSE. Residues 439-479 are disordered; it reads EARKFSSEQTRANSPTSRELWVRGEDNPLSETGNERSGTGS. 2 stretches are compositionally biased toward polar residues: residues 445-455 and 467-479; these read SEQTRANSPTS and LSET…GTGS. The tract at residues 484 to 488 is dimerization of protease; it reads PQITL. One can recognise a Peptidase A2 domain in the interval 503–572; the sequence is REALLDTGAD…TPVNIIGRNM (70 aa). The For protease activity; shared with dimeric partner role is filled by aspartate 508. Dimerization of protease stretches follow at residues 532–538 and 571–583; these read GIGGFIK and NMLT…LNFP. A Reverse transcriptase domain is found at 626-816; that stretch reads EGKISKIGPE…PPFLWMGYEL (191 aa). Mg(2+) is bound by residues aspartate 692, aspartate 767, and aspartate 768. Positions 809–817 are RT 'primer grip'; sequence FLWMGYELH. The Tryptophan repeat motif motif lies at 980-996; it reads WGTWWTEYWQATWIPEW. An RNase H type-1 domain is found at 1016-1139; sequence IVGAETFYVD…VDKLVSSGIR (124 aa). The Mg(2+) site is built by aspartate 1025, glutamate 1060, aspartate 1080, and aspartate 1131. The Integrase-type zinc-finger motif lies at 1145–1186; sequence DGIDKAQEEHEKYHNNWRAMASDFNLPPVVAKEIVASCDKCQ. The Zn(2+) site is built by histidine 1154, histidine 1158, cysteine 1182, and cysteine 1185. The 151-residue stretch at 1196–1346 folds into the Integrase catalytic domain; it reads VDCSPGIWQL…SAGERIIDII (151 aa). The Mg(2+) site is built by aspartate 1206, aspartate 1258, and glutamate 1294. A DNA-binding region (integrase-type) is located at residues 1365–1411; that stretch reads FRVYYRDSREPIWKGPAKLLWKGEGAVVIQNSEIKVVPRRKAKIIRD.

As to quaternary structure, homotrimer; further assembles as hexamers of trimers. Interacts with gp41 (via C-terminus). Interacts with host CALM1; this interaction induces a conformational change in the Matrix protein, triggering exposure of the myristate group. Interacts with host AP3D1; this interaction allows the polyprotein trafficking to multivesicular bodies during virus assembly. Part of the pre-integration complex (PIC) which is composed of viral genome, matrix protein, Vpr and integrase. Homodimer; the homodimer further multimerizes as homohexamers or homopentamers. Interacts with human PPIA/CYPA; This interaction stabilizes the capsid. Interacts with human NUP153. Interacts with host PDZD8; this interaction stabilizes the capsid. Interacts with monkey TRIM5; this interaction destabilizes the capsid. In terms of assembly, homodimer, whose active site consists of two apposed aspartic acid residues. As to quaternary structure, heterodimer of p66 RT and p51 RT (RT p66/p51). Heterodimerization of RT is essential for DNA polymerase activity. The overall folding of the subdomains is similar in p66 RT and p51 RT but the spatial arrangements of the subdomains are dramatically different. Homotetramer; may further associate as a homohexadecamer. Part of the pre-integration complex (PIC) which is composed of viral genome, matrix protein, Vpr and integrase. Interacts with human SMARCB1/INI1 and human PSIP1/LEDGF isoform 1. Interacts with human KPNA3; this interaction might play a role in nuclear import of the pre-integration complex. Interacts with human NUP153; this interaction might play a role in nuclear import of the pre-integration complex. Requires Mg(2+) as cofactor. Post-translationally, specific enzymatic cleavages by the viral protease yield mature proteins. The protease is released by autocatalytic cleavage. The polyprotein is cleaved during and after budding, this process is termed maturation. Proteolytic cleavage of p66 RT removes the RNase H domain to yield the p51 RT subunit. Nucleocapsid protein p7 might be further cleaved after virus entry. Tyrosine phosphorylated presumably in the virion by a host kinase. Phosphorylation is apparently not a major regulator of membrane association. In terms of processing, phosphorylated possibly by host MAPK1; this phosphorylation is necessary for Pin1-mediated virion uncoating. Post-translationally, methylated by host PRMT6, impairing its function by reducing RNA annealing and the initiation of reverse transcription.

It localises to the host cell membrane. Its subcellular location is the host endosome. The protein resides in the host multivesicular body. The protein localises to the virion membrane. It is found in the host nucleus. It localises to the host cytoplasm. Its subcellular location is the virion. It catalyses the reaction Specific for a P1 residue that is hydrophobic, and P1' variable, but often Pro.. The enzyme catalyses Endohydrolysis of RNA in RNA/DNA hybrids. Three different cleavage modes: 1. sequence-specific internal cleavage of RNA. Human immunodeficiency virus type 1 and Moloney murine leukemia virus enzymes prefer to cleave the RNA strand one nucleotide away from the RNA-DNA junction. 2. RNA 5'-end directed cleavage 13-19 nucleotides from the RNA end. 3. DNA 3'-end directed cleavage 15-20 nucleotides away from the primer terminus.. The catalysed reaction is 3'-end directed exonucleolytic cleavage of viral RNA-DNA hybrid.. It carries out the reaction DNA(n) + a 2'-deoxyribonucleoside 5'-triphosphate = DNA(n+1) + diphosphate. With respect to regulation, protease: The viral protease is inhibited by many synthetic protease inhibitors (PIs), such as amprenavir, atazanavir, indinavir, loprinavir, nelfinavir, ritonavir and saquinavir. Use of protease inhibitors in tritherapy regimens permit more ambitious therapeutic strategies. Reverse transcriptase/ribonuclease H: RT can be inhibited either by nucleoside RT inhibitors (NRTIs) or by non nucleoside RT inhibitors (NNRTIs). NRTIs act as chain terminators, whereas NNRTIs inhibit DNA polymerization by binding a small hydrophobic pocket near the RT active site and inducing an allosteric change in this region. Classical NRTIs are abacavir, adefovir (PMEA), didanosine (ddI), lamivudine (3TC), stavudine (d4T), tenofovir (PMPA), zalcitabine (ddC), and zidovudine (AZT). Classical NNRTIs are atevirdine (BHAP U-87201E), delavirdine, efavirenz (DMP-266), emivirine (I-EBU), and nevirapine (BI-RG-587). The tritherapies used as a basic effective treatment of AIDS associate two NRTIs and one NNRTI. Mediates, with Gag polyprotein, the essential events in virion assembly, including binding the plasma membrane, making the protein-protein interactions necessary to create spherical particles, recruiting the viral Env proteins, and packaging the genomic RNA via direct interactions with the RNA packaging sequence (Psi). Gag-Pol polyprotein may regulate its own translation, by the binding genomic RNA in the 5'-UTR. At low concentration, the polyprotein would promote translation, whereas at high concentration, the polyprotein would encapsidate genomic RNA and then shut off translation. In terms of biological role, targets the polyprotein to the plasma membrane via a multipartite membrane-binding signal, that includes its myristoylated N-terminus. Matrix protein is part of the pre-integration complex. Implicated in the release from host cell mediated by Vpu. Binds to RNA. Its function is as follows. Forms the conical core that encapsulates the genomic RNA-nucleocapsid complex in the virion. Most core are conical, with only 7% tubular. The core is constituted by capsid protein hexamer subunits. The core is disassembled soon after virion entry. Host restriction factors such as TRIM5-alpha or TRIMCyp bind retroviral capsids and cause premature capsid disassembly, leading to blocks in reverse transcription. Capsid restriction by TRIM5 is one of the factors which restricts HIV-1 to the human species. Host PIN1 apparently facilitates the virion uncoating. On the other hand, interactions with PDZD8 or CYPA stabilize the capsid. Functionally, encapsulates and protects viral dimeric unspliced genomic RNA (gRNA). Binds these RNAs through its zinc fingers. Acts as a nucleic acid chaperone which is involved in rearangement of nucleic acid secondary structure during gRNA retrotranscription. Also facilitates template switch leading to recombination. As part of the polyprotein, participates in gRNA dimerization, packaging, tRNA incorporation and virion assembly. Aspartyl protease that mediates proteolytic cleavages of Gag and Gag-Pol polyproteins during or shortly after the release of the virion from the plasma membrane. Cleavages take place as an ordered, step-wise cascade to yield mature proteins. This process is called maturation. Displays maximal activity during the budding process just prior to particle release from the cell. Also cleaves Nef and Vif, probably concomitantly with viral structural proteins on maturation of virus particles. Hydrolyzes host EIF4GI and PABP1 in order to shut off the capped cellular mRNA translation. The resulting inhibition of cellular protein synthesis serves to ensure maximal viral gene expression and to evade host immune response. Also mediates cleavage of host YTHDF3. Mediates cleavage of host CARD8, thereby activating the CARD8 inflammasome, leading to the clearance of latent HIV-1 in patient CD4(+) T-cells after viral reactivation; in contrast, HIV-1 can evade CARD8-sensing when its protease remains inactive in infected cells prior to viral budding. In terms of biological role, multifunctional enzyme that converts the viral RNA genome into dsDNA in the cytoplasm, shortly after virus entry into the cell. This enzyme displays a DNA polymerase activity that can copy either DNA or RNA templates, and a ribonuclease H (RNase H) activity that cleaves the RNA strand of RNA-DNA heteroduplexes in a partially processive 3' to 5' endonucleasic mode. Conversion of viral genomic RNA into dsDNA requires many steps. A tRNA(3)-Lys binds to the primer-binding site (PBS) situated at the 5'-end of the viral RNA. RT uses the 3' end of the tRNA primer to perform a short round of RNA-dependent minus-strand DNA synthesis. The reading proceeds through the U5 region and ends after the repeated (R) region which is present at both ends of viral RNA. The portion of the RNA-DNA heteroduplex is digested by the RNase H, resulting in a ssDNA product attached to the tRNA primer. This ssDNA/tRNA hybridizes with the identical R region situated at the 3' end of viral RNA. This template exchange, known as minus-strand DNA strong stop transfer, can be either intra- or intermolecular. RT uses the 3' end of this newly synthesized short ssDNA to perform the RNA-dependent minus-strand DNA synthesis of the whole template. RNase H digests the RNA template except for two polypurine tracts (PPTs) situated at the 5'-end and near the center of the genome. It is not clear if both polymerase and RNase H activities are simultaneous. RNase H probably can proceed both in a polymerase-dependent (RNA cut into small fragments by the same RT performing DNA synthesis) and a polymerase-independent mode (cleavage of remaining RNA fragments by free RTs). Secondly, RT performs DNA-directed plus-strand DNA synthesis using the PPTs that have not been removed by RNase H as primers. PPTs and tRNA primers are then removed by RNase H. The 3' and 5' ssDNA PBS regions hybridize to form a circular dsDNA intermediate. Strand displacement synthesis by RT to the PBS and PPT ends produces a blunt ended, linear dsDNA copy of the viral genome that includes long terminal repeats (LTRs) at both ends. Its function is as follows. Catalyzes viral DNA integration into the host chromosome, by performing a series of DNA cutting and joining reactions. This enzyme activity takes place after virion entry into a cell and reverse transcription of the RNA genome in dsDNA. The first step in the integration process is 3' processing. This step requires a complex comprising the viral genome, matrix protein, Vpr and integrase. This complex is called the pre-integration complex (PIC). The integrase protein removes 2 nucleotides from each 3' end of the viral DNA, leaving recessed CA OH's at the 3' ends. In the second step, the PIC enters cell nucleus. This process is mediated through integrase and Vpr proteins, and allows the virus to infect a non dividing cell. This ability to enter the nucleus is specific of lentiviruses, other retroviruses cannot and rely on cell division to access cell chromosomes. In the third step, termed strand transfer, the integrase protein joins the previously processed 3' ends to the 5' ends of strands of target cellular DNA at the site of integration. The 5'-ends are produced by integrase-catalyzed staggered cuts, 5 bp apart. A Y-shaped, gapped, recombination intermediate results, with the 5'-ends of the viral DNA strands and the 3' ends of target DNA strands remaining unjoined, flanking a gap of 5 bp. The last step is viral DNA integration into host chromosome. This involves host DNA repair synthesis in which the 5 bp gaps between the unjoined strands are filled in and then ligated. Since this process occurs at both cuts flanking the HIV genome, a 5 bp duplication of host DNA is produced at the ends of HIV-1 integration. Alternatively, Integrase may catalyze the excision of viral DNA just after strand transfer, this is termed disintegration. This is Gag-Pol polyprotein (gag-pol) from Homo sapiens (Human).